Reading from the N-terminus, the 244-residue chain is Small ribosomal subunit protein uS2 (244 aa).

Belongs to the universal ribosomal protein uS2 family.

The chain is Small ribosomal subunit protein uS2 from Endomicrobium trichonymphae.